The chain runs to 591 residues: MGMVTATAAAALLASPPQGHLGRRCHLVVPGLRLRPPASSSPPHAAPPLRLSNFVPRCYITNVEVDVSHTSEQEALDDHPPLLPACAIPVVHLRDVPDASPFPLHESASHSTDFEELPVLSEGELHTIAATPAHPAGLYALYASYLFGNLVEQLWNFAWPAALAILHPSLLPVAIVGFFTKLSVFIGAPIVGKLMDHFPRIPMYTGLNAVQVATQLISAAMVIYAMKNVTHASTSAVVLKPWFIALVAAGAIERLAGLALGVAMERDWVVLLAGTNRPVALAQANAVLNRLDLVCETVGASVFGLLLSKYHPVTCLKIACGLMICSFPVLVVLGQLINRFSCHALDSSRTPSEESICANLLDVRKIVQNGLSAIRNGWNEYKQQTVLPASVATVFLNFNVALAPGAIMTALLMHRGISPSIVGAFSGLCSIMGLVATFISSSLVERVGILKAGAAGLIVQASLLSVALVVYWTGSISQRTPLLIFLAAIALSRLGHMSYDVVGTQILQTGVPASKANLIGGMEVSISSLAELVMLGMAIIANDVSHFGFLAILSVSSVAGAAWMFCQWLGNPTDEQRELFMFDPHFQVEPI.

The N-terminal 66 residues, 1-66, are a transit peptide targeting the chloroplast; that stretch reads MGMVTATAAA…RCYITNVEVD (66 aa). Helical transmembrane passes span 159 to 179, 206 to 226, 242 to 262, 293 to 313, 318 to 338, 391 to 411, 419 to 439, 452 to 472, 482 to 502, 518 to 540, and 547 to 569; these read WPAA…VGFF, GLNA…IYAM, WFIA…ALGV, LVCE…YHPV, IACG…QLIN, VATV…MTAL, PSIV…ATFI, AGAA…VVYW, LLIF…YDVV, LIGG…MAII, and FGFL…CQWL.

The protein belongs to the ferroportin (FP) (TC 2.A.100) family. SLC40A subfamily.

The protein localises to the membrane. Its subcellular location is the plastid. It is found in the chloroplast envelope. Functionally, may be involved in iron transport and iron homeostasis. This is Solute carrier family 40 member 2, chloroplastic from Oryza sativa subsp. japonica (Rice).